The chain runs to 103 residues: Integration host factor subunit beta (103 aa).

The interval 59-82 (RLGRNPKTGESVALPGKHVPHFKP) is disordered.

It belongs to the bacterial histone-like protein family. Heterodimer of an alpha and a beta chain.

In terms of biological role, this protein is one of the two subunits of integration host factor, a specific DNA-binding protein that functions in genetic recombination as well as in transcriptional and translational control. In Xanthomonas oryzae pv. oryzae (strain MAFF 311018), this protein is Integration host factor subunit beta.